Consider the following 315-residue polypeptide: Histone-lysine N-methyltransferase SETMAR (315 aa).

The Pre-SET domain maps to 74–137; sequence PGCACIKTPC…HCRNRVVQSG (64 aa). Zn(2+) is bound by residues Cys76, Cys78, Cys83, Cys88, Cys90, Cys119, Cys123, Cys125, and Cys129. Positions 140-264 constitute an SET domain; that stretch reads FLLQVFQTEK…PGEELSYDYS (125 aa). S-adenosyl-L-methionine-binding positions include 150 to 152, Tyr193, Arg221, and 224 to 225; these read KGW and NH. Positions 227, 288, 290, and 295 each coordinate Zn(2+). The 17-residue stretch at 284-300 folds into the Post-SET domain; the sequence is PRKPCYCGAQSCATFLP.

It belongs to the class V-like SAM-binding methyltransferase superfamily.

It localises to the nucleus. It is found in the chromosome. It catalyses the reaction L-lysyl(36)-[histone H3] + 2 S-adenosyl-L-methionine = N(6),N(6)-dimethyl-L-lysyl(36)-[histone H3] + 2 S-adenosyl-L-homocysteine + 2 H(+). Its function is as follows. Histone methyltransferase that methylates 'Lys-4' and 'Lys-36' of histone H3, 2 specific tags for epigenetic transcriptional activation. Specifically mediates dimethylation of H3 'Lys-36'. The polypeptide is Histone-lysine N-methyltransferase SETMAR (Rattus norvegicus (Rat)).